The following is a 432-amino-acid chain: Putative D-alanyl-D-alanine carboxypeptidase (432 aa).

A helical; Signal-anchor transmembrane segment spans residues 7 to 25 (ATVLLTFSLSAFAVEYPVL).

Belongs to the peptidase S12 family. YfeW subfamily.

The protein resides in the cell inner membrane. It catalyses the reaction Preferential cleavage: (Ac)2-L-Lys-D-Ala-|-D-Ala. Also transpeptidation of peptidyl-alanyl moieties that are N-acyl substituents of D-alanine.. This is Putative D-alanyl-D-alanine carboxypeptidase from Salmonella heidelberg (strain SL476).